The sequence spans 581 residues: Protein LYRIC (581 aa).

The Lumenal portion of the chain corresponds to 1–49; it reads MAARSWQDELAQQAEEGSARLRELLSVGLGFLRTELGLDLGLEPKRYPS. Positions 1-71 are activation of NF-kappa-B; that stretch reads MAARSWQDEL…LLLFLLGYGW (71 aa). The helical transmembrane segment at 50–70 threads the bilayer; sequence WVILVGTGALGLLLLFLLGYG. Over 71–581 the chain is Cytoplasmic; sequence WAAACAGARK…KKKKKARRET (511 aa). The interval 72-168 is interaction with BCCIP; the sequence is AAACAGARKK…EKSKKNKKKS (97 aa). A disordered region spans residues 77-221; the sequence is GARKKRRSPP…DSGSLDSTIP (145 aa). Residues 100 to 204 are interaction with RELA; the sequence is EDPAQLKNLR…ISHREKRQQR (105 aa). The span at 108 to 126 shows a compositional bias: basic and acidic residues; that stretch reads LRSEEQKKKNRKKLPEKPK. Residue threonine 142 is modified to Phosphothreonine. Basic residues predominate over residues 159–168; the sequence is EKSKKNKKKS. Phosphoserine is present on serine 179. The segment covering 197–207 has biased composition (basic residues); the sequence is HREKRQQRKRD. A phosphoserine mark is found at serine 215 and serine 250. Lysine 263 is modified (N6-acetyllysine). The disordered stretch occupies residues 280 to 581; the sequence is VNGGGWSEKS…KKKKKARRET (302 aa). 3 positions are modified to phosphoserine: serine 297, serine 305, and serine 310. Polar residues predominate over residues 318–331; that stretch reads QSAWTQDPGDTNAN. Residues serine 343 and serine 368 each carry the phosphoserine modification. Composition is skewed to polar residues over residues 353 to 371 and 382 to 393; these read EPVS…SRNQ and NGLSSADPSSDW. Residues 380-442 form a lung-homing for mammary tumors region; sequence GLNGLSSADP…EGALPTGKSK (63 aa). Residues serine 414 and serine 425 each carry the phosphoserine modification. The segment covering 421–433 has biased composition (basic and acidic residues); it reads DQKDSDDDKEKGE. Over residues 440 to 450 the composition is skewed to basic residues; it reads KSKKKKKKKKK. 4 positions are modified to phosphoserine: serine 456, serine 477, serine 493, and serine 495. 2 stretches are compositionally biased toward polar residues: residues 519 to 535 and 548 to 567; these read PSVT…SSQV and NAKQ…NWES. The residue at position 567 (serine 567) is a Phosphoserine. Over residues 570–581 the composition is skewed to basic residues; sequence QIKKKKKARRET.

In terms of assembly, interacts with BCCIP, CREBBP/CBP and RELA/p65. In terms of tissue distribution, widely expressed, with highest levels in liver, kidney, prostate and small intestine. Not detected in endothelial cells.

It is found in the endoplasmic reticulum membrane. The protein resides in the nucleus membrane. It localises to the cell junction. The protein localises to the tight junction. Its subcellular location is the nucleus. It is found in the nucleolus. The protein resides in the cytoplasm. It localises to the perinuclear region. Down-regulates SLC1A2/EAAT2 promoter activity when expressed ectopically. Activates the nuclear factor kappa-B (NF-kappa-B) transcription factor. Promotes anchorage-independent growth of immortalized melanocytes and astrocytes which is a key component in tumor cell expansion. Promotes lung metastasis and also has an effect on bone and brain metastasis, possibly by enhancing the seeding of tumor cells to the target organ endothelium. Induces chemoresistance. This chain is Protein LYRIC (Mtdh), found in Rattus norvegicus (Rat).